A 92-amino-acid chain; its full sequence is Small ribosomal subunit protein uS19c (92 aa).

The protein belongs to the universal ribosomal protein uS19 family.

It is found in the plastid. The protein resides in the chloroplast. Protein S19 forms a complex with S13 that binds strongly to the 16S ribosomal RNA. In Cicer arietinum (Chickpea), this protein is Small ribosomal subunit protein uS19c.